The sequence spans 476 residues: Undecaprenyl-phosphate galactose phosphotransferase (476 aa).

5 helical membrane-spanning segments follow: residues 15 to 35, 52 to 72, 93 to 113, 115 to 135, and 283 to 303; these read IFLAISDLIFFNLALWFSLGC, LDTRVITHFILSVVCVGWFWI, TIVIFAIFDLALIAFTKWQFS, YVWVFCWTFALILVPFFRALT, and FDIVCSIMILIIASPLMIYLW. Topologically, residues 304–476 are cytoplasmic; the sequence is YKVTRDGGPA…KVVLRRDGAY (173 aa).

It belongs to the bacterial sugar transferase family.

Its subcellular location is the cell inner membrane. The enzyme catalyses di-trans,octa-cis-undecaprenyl phosphate + UDP-alpha-D-galactose = alpha-D-galactosyl-di-trans,octa-cis-undecaprenyl diphosphate + UMP. It participates in bacterial outer membrane biogenesis; LPS O-antigen biosynthesis. Functionally, is responsible for transferring galactose-1-phosphate to the lipid precursor undecaprenol phosphate in the first steps of O-polysaccharide biosynthesis. This chain is Undecaprenyl-phosphate galactose phosphotransferase (rfbP), found in Salmonella typhimurium (strain LT2 / SGSC1412 / ATCC 700720).